The chain runs to 939 residues: Isoleucine--tRNA ligase (939 aa).

A 'HIGH' region motif is present at residues 57–67 (PYANGHIHIGH). Glu563 is an L-isoleucyl-5'-AMP binding site. Positions 604 to 608 (KMSKS) match the 'KMSKS' region motif. ATP is bound at residue Lys607. Residues Cys903, Cys906, Cys921, and Cys924 each coordinate Zn(2+).

It belongs to the class-I aminoacyl-tRNA synthetase family. IleS type 1 subfamily. As to quaternary structure, monomer. Zn(2+) serves as cofactor.

The protein localises to the cytoplasm. It catalyses the reaction tRNA(Ile) + L-isoleucine + ATP = L-isoleucyl-tRNA(Ile) + AMP + diphosphate. Functionally, catalyzes the attachment of isoleucine to tRNA(Ile). As IleRS can inadvertently accommodate and process structurally similar amino acids such as valine, to avoid such errors it has two additional distinct tRNA(Ile)-dependent editing activities. One activity is designated as 'pretransfer' editing and involves the hydrolysis of activated Val-AMP. The other activity is designated 'posttransfer' editing and involves deacylation of mischarged Val-tRNA(Ile). This chain is Isoleucine--tRNA ligase, found in Sulfurihydrogenibium sp. (strain YO3AOP1).